A 124-amino-acid chain; its full sequence is Small ribosomal subunit protein uS12 (124 aa).

Position 89 is a 3-methylthioaspartic acid (Asp-89).

It belongs to the universal ribosomal protein uS12 family. As to quaternary structure, part of the 30S ribosomal subunit. Contacts proteins S8 and S17. May interact with IF1 in the 30S initiation complex.

Functionally, with S4 and S5 plays an important role in translational accuracy. In terms of biological role, interacts with and stabilizes bases of the 16S rRNA that are involved in tRNA selection in the A site and with the mRNA backbone. Located at the interface of the 30S and 50S subunits, it traverses the body of the 30S subunit contacting proteins on the other side and probably holding the rRNA structure together. The combined cluster of proteins S8, S12 and S17 appears to hold together the shoulder and platform of the 30S subunit. In Acinetobacter baylyi (strain ATCC 33305 / BD413 / ADP1), this protein is Small ribosomal subunit protein uS12.